A 394-amino-acid polypeptide reads, in one-letter code: GDNF family receptor alpha-like (394 aa).

Positions 1 to 18 are cleaved as a signal peptide; it reads MIVFIFLAMGLSLENEYT. The Extracellular portion of the chain corresponds to 19–351; sequence SQTNNCTYLR…TGFHSPFNGE (333 aa). Asparagine 23, asparagine 50, asparagine 62, asparagine 67, asparagine 103, and asparagine 116 each carry an N-linked (GlcNAc...) asparagine glycan. 11 disulfide bridges follow: cysteine 131-cysteine 189, cysteine 138-cysteine 144, cysteine 155-cysteine 167, cysteine 162-cysteine 210, cysteine 191-cysteine 198, cysteine 220-cysteine 291, cysteine 227-cysteine 233, cysteine 244-cysteine 275, cysteine 252-cysteine 258, cysteine 269-cysteine 316, and cysteine 293-cysteine 304. Residues 149 to 228 form a required for interaction with GDF15 region; the sequence is ASYLKACSAN…TCLSVIRSCQ (80 aa). Residues 352-371 form a helical membrane-spanning segment; sequence VIYAAMCMTVTCGILLLVMV. Over 372 to 394 the chain is Cytoplasmic; that stretch reads KLRTSRISSKARDPSSIQIPGEL.

This sequence belongs to the GDNFR family. In terms of assembly, interacts (via the extracellular domain) with GDF15 and RET; receptor of GDF15, mediates cellular signaling through interaction with RET after GDF15-binding. Interaction with RET requires previous GDF15-binding. Post-translationally, cleaved and inactivated by MMP14, inhibiting the GDF15-GFRAL aversive response. As to expression, expressed in the brainstem, restricted to cells in the area postrema and the immediately adjacent region of the nucleus tractus solitarius (at protein level). Detected at low levels in testis and adipose tissue.

Its subcellular location is the cell membrane. With respect to regulation, specifically inhibited by 3P10 monoclonal antibody. Strongly activated by LY3463251, a long-acting and stable agonist composed of GDF15 conjugated monomeric human IgG4 Fc. Functionally, brainstem-restricted receptor for GDF15 hormone, which triggers an aversive response, characterized by nausea, vomiting, and/or loss of appetite in response to various stresses. The aversive response is both required to reduce continuing exposure to those stresses at the time of exposure and to promote avoidance behavior in the future. The GDF15-GFRAL aversive response is triggered by stresses, such as anticancer drugs (camptothecin or cisplatin), cancers or drugs such as metformin. Upon interaction with its ligand, GDF15, mediates the GDF15-induced autophosphorylation and activation of the RET tyrosine kinase receptor, leading to activation of MAPK- and AKT- signaling pathways. Ligand-binding activates GFRAL-expressing neurons localized in the area postrema and nucleus tractus solitarius of the brainstem. The GDF15-GFRAL signal induces expression of genes involved in metabolism, such as lipid metabolism in adipose tissues. The polypeptide is GDNF family receptor alpha-like (Homo sapiens (Human)).